A 509-amino-acid chain; its full sequence is MSTDTIPSLSSPPAPEFPSTTPDTATSPAPSQPSIIGPSSLAPFPETTTNIDGGSRNVALTGLITGVVLGATFVLLGVCIFVCFYKRKKRKLKKKKKEDIEASINRDSLDPKDDSNNLQQWSSSEIGQNLFTYEDLSKATSNFSNTNLLGQGGFGYVHRGVLVDGTLVAIKQLKSGSGQGEREFQAEIQTISRVHHRHLVSLLGYCITGAQRLLVYEFVPNKTLEFHLHEKERPVMEWSKRMKIALGAAKGLAYLHEDCNPKTIHRDVKAANILIDDSYEAKLADFGLARSSLDTDTHVSTRIMGTFGYLAPEYASSGKLTEKSDVFSIGVVLLELITGRRPVDKSQPFADDDSIVDWAKPLMIQALNDGNFDGLVDPRLENDFDINEMTRMVACAAASVRHSAKRRPKMSQIVRAFEGNISIDDLTEGAAPGQSTIYSLDGSSDYSSTQYKEDLKKFKKMAFESKTFGSSECSGLTSDNGQNPSGSSSITEGQRTTQEIEPEKNTKDT.

The interval 1-44 (MSTDTIPSLSSPPAPEFPSTTPDTATSPAPSQPSIIGPSSLAPF) is disordered. At 1-61 (MSTDTIPSLS…DGGSRNVALT (61 aa)) the chain is on the extracellular side. The span at 18 to 34 (PSTTPDTATSPAPSQPS) shows a compositional bias: low complexity. The helical transmembrane segment at 62-82 (GLITGVVLGATFVLLGVCIFV) threads the bilayer. At 83–509 (CFYKRKKRKL…IEPEKNTKDT (427 aa)) the chain is on the cytoplasmic side. Thr132 is modified (phosphothreonine). A Protein kinase domain is found at 143-423 (FSNTNLLGQG…VRAFEGNISI (281 aa)). Residues 149-157 (LGQGGFGYV) and Lys171 each bind ATP. Tyr216 carries the phosphotyrosine modification. Asp267 acts as the Proton acceptor in catalysis. The residue at position 300 (Ser300) is a Phosphoserine. Thr301 and Thr306 each carry phosphothreonine. At Tyr314 the chain carries Phosphotyrosine. Over residues 468–499 (FGSSECSGLTSDNGQNPSGSSSITEGQRTTQE) the composition is skewed to polar residues. Residues 468 to 509 (FGSSECSGLTSDNGQNPSGSSSITEGQRTTQEIEPEKNTKDT) form a disordered region.

Belongs to the protein kinase superfamily. Ser/Thr protein kinase family. In terms of tissue distribution, mostly expressed in inflorescence bolts, and, to a lower extent, in flower buds and siliques.

Its subcellular location is the cell membrane. The catalysed reaction is L-seryl-[protein] + ATP = O-phospho-L-seryl-[protein] + ADP + H(+). The enzyme catalyses L-threonyl-[protein] + ATP = O-phospho-L-threonyl-[protein] + ADP + H(+). The polypeptide is Proline-rich receptor-like protein kinase PERK15 (PERK15) (Arabidopsis thaliana (Mouse-ear cress)).